A 381-amino-acid polypeptide reads, in one-letter code: Alcohol dehydrogenase class-3 (381 aa).

C49 lines the Zn(2+) pocket. H50 is an NAD(+) binding site. An alcohol is bound by residues T51 and H71. The Zn(2+) site is built by H71, E72, C101, C104, C107, C115, and C179. Residues 204-209 (GLGTVG), D228, K233, I274, 297-299 (VGV), 322-324 (TAF), and R374 contribute to the NAD(+) site.

The protein belongs to the zinc-containing alcohol dehydrogenase family. Class-III subfamily. In terms of assembly, homodimer. Zn(2+) is required as a cofactor.

The protein localises to the cytoplasm. It carries out the reaction a primary alcohol + NAD(+) = an aldehyde + NADH + H(+). The enzyme catalyses a secondary alcohol + NAD(+) = a ketone + NADH + H(+). The catalysed reaction is S-(hydroxymethyl)glutathione + NADP(+) = S-formylglutathione + NADPH + H(+). It catalyses the reaction S-(hydroxymethyl)glutathione + NAD(+) = S-formylglutathione + NADH + H(+). The chain is Alcohol dehydrogenase class-3 from Oryza sativa subsp. japonica (Rice).